We begin with the raw amino-acid sequence, 302 residues long: UDP-N-acetylenolpyruvoylglucosamine reductase (302 aa).

One can recognise an FAD-binding PCMH-type domain in the interval 31–210 (IGGQTKVYFR…ENEVLELKKK (180 aa)). The active site involves Arg175. Ser224 serves as the catalytic Proton donor. Residue Glu297 is part of the active site.

Belongs to the MurB family. Requires FAD as cofactor.

It is found in the cytoplasm. It catalyses the reaction UDP-N-acetyl-alpha-D-muramate + NADP(+) = UDP-N-acetyl-3-O-(1-carboxyvinyl)-alpha-D-glucosamine + NADPH + H(+). It participates in cell wall biogenesis; peptidoglycan biosynthesis. Cell wall formation. This is UDP-N-acetylenolpyruvoylglucosamine reductase from Pelagibacter ubique (strain HTCC1062).